The following is a 445-amino-acid chain: Proline--tRNA ligase (445 aa).

Belongs to the class-II aminoacyl-tRNA synthetase family. ProS type 2 subfamily. As to quaternary structure, homodimer.

The protein resides in the cytoplasm. It carries out the reaction tRNA(Pro) + L-proline + ATP = L-prolyl-tRNA(Pro) + AMP + diphosphate. Functionally, catalyzes the attachment of proline to tRNA(Pro) in a two-step reaction: proline is first activated by ATP to form Pro-AMP and then transferred to the acceptor end of tRNA(Pro). The chain is Proline--tRNA ligase from Cereibacter sphaeroides (strain ATCC 17029 / ATH 2.4.9) (Rhodobacter sphaeroides).